A 1379-amino-acid polypeptide reads, in one-letter code: Increased rDNA silencing protein 4 homolog (1379 aa).

8 disordered regions span residues 1–25, 138–159, 240–314, 337–370, 534–573, 768–816, 1047–1110, and 1168–1208; these read MDAI…RNLS, TSTR…HHPR, EFDF…PLPS, SQPF…QAIM, ASKR…ASQQ, TDLH…NDIG, DAPS…KDSQ, and AVHE…DGKY. Positions 250-259 are enriched in basic and acidic residues; the sequence is PSDKNLEKLK. Polar residues predominate over residues 262 to 287; sequence ASKQASESQSLKNMESLSLARSSPIL. Over residues 541 to 555 the composition is skewed to low complexity; it reads SQQTESASKSSSNIS. The segment covering 562–573 has biased composition (polar residues); the sequence is PPSNFSISASQQ. Basic residues predominate over residues 770–780; the sequence is LHRKPRRKHKS. Residues 793–802 show a composition bias toward acidic residues; that stretch reads DESPQSDEVE. The EH domain occupies 1240 to 1329; the sequence is AANKGYLLSK…DSVWLSSKRM (90 aa). Positions 1273 to 1308 constitute an EF-hand domain; it reads APTSVLAKIYDLVDRHHTGVLGRDEFIVGMFLIDQY.

This sequence belongs to the IRS4 family.

Positive regulator of phosphatidylinositol 4,5-bisphosphate turnover and negatively regulates signaling through the cell integrity pathway. Involved in rDNA silencing. The polypeptide is Increased rDNA silencing protein 4 homolog (Schizosaccharomyces pombe (strain 972 / ATCC 24843) (Fission yeast)).